The sequence spans 323 residues: Serine acetyltransferase 2 (323 aa).

A disordered region spans residues 302-323; sequence AQSNGPSLSAGDTEKGHTNSTS. The segment covering 313 to 323 has biased composition (basic and acidic residues); the sequence is DTEKGHTNSTS.

It belongs to the transferase hexapeptide repeat family. As to quaternary structure, homomultimer. Ubiquitously expressed at low levels. Localized in vascular tissues, particularly in phloem.

The protein localises to the cytoplasm. The catalysed reaction is L-serine + acetyl-CoA = O-acetyl-L-serine + CoA. The protein operates within amino-acid biosynthesis; L-cysteine biosynthesis; L-cysteine from L-serine: step 1/2. In Arabidopsis thaliana (Mouse-ear cress), this protein is Serine acetyltransferase 2.